The chain runs to 625 residues: Chaperone protein HtpG (625 aa).

The segment at 1–337 (MSTNQETRGF…TNDLPLNVSR (337 aa)) is a; substrate-binding. The segment at 338 to 554 (EILQENKITA…NDEMTTQMAK (217 aa)) is b. The segment at 555 to 625 (LFAAMGQKAP…FIKRMNKLLG (71 aa)) is c.

It belongs to the heat shock protein 90 family. As to quaternary structure, homodimer.

Its subcellular location is the cytoplasm. Functionally, molecular chaperone. Has ATPase activity. In Actinobacillus pleuropneumoniae serotype 3 (strain JL03), this protein is Chaperone protein HtpG.